Here is a 290-residue protein sequence, read N- to C-terminus: RIO-type serine/threonine-protein kinase Rio1 (290 aa).

The 215-residue stretch at 76–290 (TEYIGIVNSG…PIDEAMIKQL (215 aa)) folds into the Protein kinase domain. ATP contacts are provided by residues 82 to 90 (VNSGKEAVV) and Lys103. Asp214 functions as the Proton acceptor in the catalytic mechanism. The Mg(2+) site is built by Asn219 and Asp231. The active-site 4-aspartylphosphate intermediate is Asp231.

It belongs to the protein kinase superfamily. RIO-type Ser/Thr kinase family.

It carries out the reaction L-seryl-[protein] + ATP = O-phospho-L-seryl-[protein] + ADP + H(+). The catalysed reaction is L-threonyl-[protein] + ATP = O-phospho-L-threonyl-[protein] + ADP + H(+). The enzyme catalyses ATP + H2O = ADP + phosphate + H(+). Despite the protein kinase domain is proposed to act predominantly as an ATPase. This chain is RIO-type serine/threonine-protein kinase Rio1 (rio1), found in Methanocaldococcus jannaschii (strain ATCC 43067 / DSM 2661 / JAL-1 / JCM 10045 / NBRC 100440) (Methanococcus jannaschii).